Consider the following 290-residue polypeptide: Hydroxyacylglutathione hydrolase-like protein (290 aa).

Residues His-54, His-56, Asp-58, His-59, His-110, Asp-134, and His-172 each contribute to the Zn(2+) site.

Belongs to the metallo-beta-lactamase superfamily. Glyoxalase II family. Requires Zn(2+) as cofactor.

Hydrolase acting on ester bonds. This Homo sapiens (Human) protein is Hydroxyacylglutathione hydrolase-like protein (HAGHL).